Here is a 163-residue protein sequence, read N- to C-terminus: Epithelial membrane protein 3 (163 aa).

Residues leucine 4–leucine 24 form a helical membrane-spanning segment. N-linked (GlcNAc...) asparagine glycosylation is found at asparagine 49 and asparagine 56. Helical transmembrane passes span valine 66–phenylalanine 86, threonine 100–isoleucine 120, and phenylalanine 139–leucine 159.

Belongs to the PMP-22/EMP/MP20 family.

The protein localises to the membrane. Its function is as follows. Probably involved in cell proliferation and cell-cell interactions. The protein is Epithelial membrane protein 3 (EMP3) of Bos taurus (Bovine).